Here is a 410-residue protein sequence, read N- to C-terminus: Chorismate synthase (410 aa).

The NADP(+) site is built by Arg-43 and Arg-49. FMN contacts are provided by residues 143-145, 264-265, Gly-308, 323-327, and Arg-349; these read RSS, QA, and KPIST.

This sequence belongs to the chorismate synthase family. As to quaternary structure, homotetramer. FMNH2 is required as a cofactor.

The catalysed reaction is 5-O-(1-carboxyvinyl)-3-phosphoshikimate = chorismate + phosphate. It functions in the pathway metabolic intermediate biosynthesis; chorismate biosynthesis; chorismate from D-erythrose 4-phosphate and phosphoenolpyruvate: step 7/7. Functionally, catalyzes the anti-1,4-elimination of the C-3 phosphate and the C-6 proR hydrogen from 5-enolpyruvylshikimate-3-phosphate (EPSP) to yield chorismate, which is the branch point compound that serves as the starting substrate for the three terminal pathways of aromatic amino acid biosynthesis. This reaction introduces a second double bond into the aromatic ring system. This is Chorismate synthase from Corynebacterium glutamicum (strain ATCC 13032 / DSM 20300 / JCM 1318 / BCRC 11384 / CCUG 27702 / LMG 3730 / NBRC 12168 / NCIMB 10025 / NRRL B-2784 / 534).